The following is a 172-amino-acid chain: Large ribosomal subunit protein uL10 (172 aa).

This sequence belongs to the universal ribosomal protein uL10 family. Part of the ribosomal stalk of the 50S ribosomal subunit. The N-terminus interacts with L11 and the large rRNA to form the base of the stalk. The C-terminus forms an elongated spine to which L12 dimers bind in a sequential fashion forming a multimeric L10(L12)X complex.

Functionally, forms part of the ribosomal stalk, playing a central role in the interaction of the ribosome with GTP-bound translation factors. The protein is Large ribosomal subunit protein uL10 of Rhodospirillum rubrum (strain ATCC 11170 / ATH 1.1.1 / DSM 467 / LMG 4362 / NCIMB 8255 / S1).